The primary structure comprises 620 residues: Leucine-rich repeat and immunoglobulin-like domain-containing nogo receptor-interacting protein 1 (620 aa).

The first 41 residues, 1–41 (MQVSKRMLAGGVRSMPSPLLACWQPILLLVLGSVLSGSATG), serve as a signal peptide directing secretion. Cystine bridges form between Cys42/Cys48 and Cys46/Cys57. In terms of domain architecture, LRRNT spans 42-71 (CPPRCECSAQDRAVLCHRKRFVAVPEGIPT). Over 42–561 (CPPRCECSAQ…FDIKTLIIAT (520 aa)) the chain is Extracellular. 11 LRR repeats span residues 72–93 (ETRLLDLGKNRIKTLNQDEFAS), 96–117 (HLEELELNENIVSAVEPGAFNN), 120–141 (NLRTLGLRSNRLKLIPLGVFTG), 144–165 (NLTKLDISENKIVILLDYMFQD), 168–189 (NLKSLEVGDNDLVYISHRAFSG), 192–213 (SLEQLTLEKCNLTSIPTEALSH), 216–237 (GLIVLRLRHLNINAIRDYSFKR), 264–285 (NLTSLSITHCNLTAVPYLAVRH), 288–309 (YLRFLNLSYNPISTIEGSMLHE), 312–333 (RLQEIQLVGGQLAVVEPYAFRG), and 336–357 (YLRVLNVSGNQLTTLEESVFHS). A glycan (N-linked (GlcNAc...) asparagine) is linked at Asn144. The N-linked (GlcNAc...) asparagine glycan is linked to Asn202. N-linked (GlcNAc...) asparagine glycans are attached at residues Asn264, Asn274, and Asn293. N-linked (GlcNAc...) asparagine glycosylation occurs at Asn341. Residues 369-423 (NPLACDCRLLWVFRRRWRLNFNRQQPTCATPEFVQGKEFKDFPDVLLPNYFTCRR) enclose the LRRCT domain. 3 disulfides stabilise this stretch: Cys373–Cys396, Cys375–Cys421, and Cys446–Cys497. Positions 411-513 (PDVLLPNYFT…GNDSMPAHLH (103 aa)) constitute an Ig-like C2-type domain. Asn492, Asn505, Asn526, and Asn542 each carry an N-linked (GlcNAc...) asparagine glycan. The helical transmembrane segment at 562 to 582 (TMGFISFLGVVLFCLVLLFLW) threads the bilayer. Residues 583-620 (SRGKGNTKHNIEIEYVPRKSDAGISSADAPRKFNMKMI) are Cytoplasmic-facing. Ser602 carries the phosphoserine modification.

Homotetramer. Forms a ternary complex with RTN4R/NGFR and RTN4R/TNFRSF19. Interacts with NGRF and MYT1L. Interacts with RTN4R. Post-translationally, N-glycosylated. Contains predominantly high-mannose glycans. Expressed exclusively in the central nervous system. Highest level in the in amygdala, hippocampus, thalamus and cerebral cortex. In the rest of the brain a basal expression seems to be always present. Up-regulated in substantia nigra neurons from Parkinson disease patients.

The protein resides in the cell membrane. Its function is as follows. Functional component of the Nogo receptor signaling complex (RTN4R/NGFR) in RhoA activation responsible for some inhibition of axonal regeneration by myelin-associated factors. Is also an important negative regulator of oligodentrocyte differentiation and axonal myelination. Acts in conjunction with RTN4 and RTN4R in regulating neuronal precursor cell motility during cortical development. The chain is Leucine-rich repeat and immunoglobulin-like domain-containing nogo receptor-interacting protein 1 (LINGO1) from Homo sapiens (Human).